A 1193-amino-acid polypeptide reads, in one-letter code: Pyruvate carboxylase (1193 aa).

Residues 41–493 (QFQKILVANR…WTTFIDDTPE (453 aa)) enclose the Biotin carboxylation domain. ATP is bound by residues lysine 159, glutamate 243, and histidine 278. The region spanning 163–360 (RQLAIRCNVP…IVAAQIQIAA (198 aa)) is the ATP-grasp domain. Residue arginine 335 is part of the active site. A Pyruvate carboxyltransferase domain is found at 579–847 (CLIMDTTWRD…DPGLNSAHVR (269 aa)). Residues 587–591 (RDAHQ) and arginine 660 each bind substrate. Aspartate 588 lines the a divalent metal cation pocket. The a divalent metal cation site is built by lysine 756, histidine 786, and histidine 788. Lysine 756 bears the N6-carboxylysine mark. Residue threonine 921 coordinates substrate. A Biotinyl-binding domain is found at 1116–1191 (KADVGDSSQV…DGQDLVCKIT (76 aa)). N6-biotinyllysine is present on lysine 1157.

Requires biotin as cofactor. It depends on Zn(2+) as a cofactor.

It localises to the cytoplasm. The enzyme catalyses hydrogencarbonate + pyruvate + ATP = oxaloacetate + ADP + phosphate + H(+). The protein operates within carbohydrate biosynthesis; gluconeogenesis. Pyruvate carboxylase catalyzes a 2-step reaction, involving the ATP-dependent carboxylation of the covalently attached biotin in the first step and the transfer of the carboxyl group to pyruvate in the second. This chain is Pyruvate carboxylase (pyc), found in Aspergillus terreus.